Consider the following 254-residue polypeptide: Zinc import ATP-binding protein ZnuC (254 aa).

The ABC transporter domain occupies 5-219 (VELKEVCLSF…PEFARLFGRP (215 aa)). An ATP-binding site is contributed by 37–44 (GPNGAGKS). Positions 233–242 (CDGEHHHHEP) are enriched in basic and acidic residues. Residues 233 to 254 (CDGEHHHHEPQVPVIRLPSRNQ) are disordered.

It belongs to the ABC transporter superfamily. Zinc importer (TC 3.A.1.15.5) family. As to quaternary structure, the complex is composed of two ATP-binding proteins (ZnuC), two transmembrane proteins (ZnuB) and a solute-binding protein (ZnuA).

The protein resides in the cell inner membrane. The catalysed reaction is Zn(2+)(out) + ATP(in) + H2O(in) = Zn(2+)(in) + ADP(in) + phosphate(in) + H(+)(in). In terms of biological role, part of the ABC transporter complex ZnuABC involved in zinc import. Responsible for energy coupling to the transport system. This is Zinc import ATP-binding protein ZnuC from Aeromonas hydrophila subsp. hydrophila (strain ATCC 7966 / DSM 30187 / BCRC 13018 / CCUG 14551 / JCM 1027 / KCTC 2358 / NCIMB 9240 / NCTC 8049).